Here is a 655-residue protein sequence, read N- to C-terminus: Chaperone protein dnaK1 (655 aa).

A Phosphothreonine; by autocatalysis modification is found at T197.

This sequence belongs to the heat shock protein 70 family.

Functionally, acts as a chaperone. The protein is Chaperone protein dnaK1 (dnaK1) of Synechococcus elongatus (strain ATCC 33912 / PCC 7942 / FACHB-805) (Anacystis nidulans R2).